The chain runs to 97 residues: Apolipoprotein C-II (97 aa).

An N-terminal signal peptide occupies residues 1–22; that stretch reads MGSRFFLALFLVLLVLGNEVQG. Residues 63-71 are lipid binding; sequence SVDEKLRDM. The segment at 75 to 97 is lipoprotein lipase cofactor; that stretch reads SSAAMSTYAGIFTDQLLTLLKGE.

It belongs to the apolipoprotein C2 family. Post-translationally, proapolipoprotein C-II is synthesized as a sialic acid containing glycoprotein which is subsequently desialylated prior to its proteolytic processing. In terms of processing, proapolipoprotein C-II, the major form found in plasma undergoes proteolytic cleavage of its N-terminal hexapeptide to generate the mature form apolipoprotein C-II, which occurs as the minor form in plasma.

The protein resides in the secreted. Component of chylomicrons, very low-density lipoproteins (VLDL), low-density lipoproteins (LDL), and high-density lipoproteins (HDL) in plasma. Plays an important role in lipoprotein metabolism as an activator of lipoprotein lipase. This Grammomys surdaster (African woodland thicket rat) protein is Apolipoprotein C-II (Apoc2).